The following is an 865-amino-acid chain: Alanine--tRNA ligase (865 aa).

Zn(2+) is bound by residues histidine 556, histidine 560, cysteine 660, and histidine 664.

This sequence belongs to the class-II aminoacyl-tRNA synthetase family. Zn(2+) is required as a cofactor.

Its subcellular location is the cytoplasm. It catalyses the reaction tRNA(Ala) + L-alanine + ATP = L-alanyl-tRNA(Ala) + AMP + diphosphate. Catalyzes the attachment of alanine to tRNA(Ala) in a two-step reaction: alanine is first activated by ATP to form Ala-AMP and then transferred to the acceptor end of tRNA(Ala). Also edits incorrectly charged Ser-tRNA(Ala) and Gly-tRNA(Ala) via its editing domain. The protein is Alanine--tRNA ligase of Ruthia magnifica subsp. Calyptogena magnifica.